The following is a 613-amino-acid chain: Probable indole-3-acetic acid-amido synthetase GH3.12 (613 aa).

This sequence belongs to the IAA-amido conjugating enzyme family. Expressed in roots.

In terms of biological role, may catalyze the synthesis of indole-3-acetic acid (IAA)-amino acid conjugates, providing a mechanism for the plant to cope with the presence of excess auxin. The polypeptide is Probable indole-3-acetic acid-amido synthetase GH3.12 (GH3.12) (Oryza sativa subsp. japonica (Rice)).